The chain runs to 768 residues: Probable LRR receptor-like serine/threonine-protein kinase At4g37250 (768 aa).

Residues 1–21 (MRMELISVIFFFFCSVLSSSA) form the signal peptide. At 22–328 (LNSDGLVLMK…PNPRTGLRPG (307 aa)) the chain is on the extracellular side. Asn-64 carries an N-linked (GlcNAc...) asparagine glycan. 8 LRR repeats span residues 67–90 (KVLTLSLPNSQLLGSIPSDLGSLL), 91–112 (TLQSLDLSNNSFNGPLPVSFFN), 115–137 (ELRFLDLSSNMISGEIPSAIGDL), 139–162 (NLLTLNLSDNALAGKLPTNLASLR), 163–183 (NLTVVSLENNYFSGEIPGGWR), 184–206 (VVEFLDLSSNLINGSLPPDFGGY), 207–229 (SLQYLNVSFNQISGEIPPEIGVN), and 232–254 (RNVTVDLSFNNLTGPIPDSPVFL). Asn-99 carries N-linked (GlcNAc...) asparagine glycosylation. Residues Asn-144, Asn-163, Asn-196, Asn-212, Asn-233, and Asn-242 are each glycosylated (N-linked (GlcNAc...) asparagine). The segment at 301-324 (PNTIGSNPVTDPNSQQTDPNPRTG) is disordered. Residues 303–320 (TIGSNPVTDPNSQQTDPN) are compositionally biased toward polar residues. Residues 329–349 (VIIGIVVGDIAGIGILAVIFL) traverse the membrane as a helical segment. Residues 350–768 (YIYRCKKNKI…IKSSSFHYGH (419 aa)) lie on the Cytoplasmic side of the membrane. The interval 361 to 432 (DNNNNDKQRT…NANQRSGDNK (72 aa)) is disordered. Over residues 378–387 (STFSSSSSSP) the composition is skewed to low complexity. Residues 407–420 (PSEEEDEDDEDEES) are compositionally biased toward acidic residues. One can recognise a Protein kinase domain in the interval 449–756 (KASAYILGAT…AVLERFHPNS (308 aa)). Residues Ser-451 and Ser-531 each carry the phosphoserine modification. Thr-553 is subject to Phosphothreonine. Ser-662 carries the phosphoserine modification.

This sequence belongs to the protein kinase superfamily. Ser/Thr protein kinase family.

The protein localises to the membrane. The catalysed reaction is L-seryl-[protein] + ATP = O-phospho-L-seryl-[protein] + ADP + H(+). The enzyme catalyses L-threonyl-[protein] + ATP = O-phospho-L-threonyl-[protein] + ADP + H(+). This chain is Probable LRR receptor-like serine/threonine-protein kinase At4g37250, found in Arabidopsis thaliana (Mouse-ear cress).